The following is a 118-amino-acid chain: Large ribosomal subunit protein uL24 (118 aa).

Belongs to the universal ribosomal protein uL24 family. In terms of assembly, part of the 50S ribosomal subunit.

Its function is as follows. One of two assembly initiator proteins, it binds directly to the 5'-end of the 23S rRNA, where it nucleates assembly of the 50S subunit. In terms of biological role, one of the proteins that surrounds the polypeptide exit tunnel on the outside of the subunit. This chain is Large ribosomal subunit protein uL24, found in Synechococcus sp. (strain CC9605).